The chain runs to 519 residues: ATP synthase subunit beta, mitochondrial (519 aa).

The N-terminal 21 residues, 1-21 (MLTRFRSAVLRGAVSITGARA), are a transit peptide targeting the mitochondrion. ATP contacts are provided by residues 184 to 191 (GAGVGKTV) and arginine 216.

It belongs to the ATPase alpha/beta chains family. In terms of assembly, F-type ATPases have 2 components, F(1) - the catalytic core - and F(o) - the membrane proton channel. F(1) has five subunits: alpha(3), beta(3), gamma(1), delta(1), epsilon(1), plus the additional subunit P18 (Tb427.05.1710) that is not present in F(1)F(o) ATP synthase from metazoa. Subunit P18 (Tb927.5.1710) interacts with the alpha subunit with a 1:1 stoichiometry; the interaction is direct. Subunit gamma is part of the central stalk. F(o) has three main subunits: a, b and c. The trypanosomal ATPase complex contains additional subunits that are not present in the F(1)F(o) ATP synthase from metazoa.

Its subcellular location is the mitochondrion. It localises to the mitochondrion inner membrane. It catalyses the reaction ATP + H2O + 4 H(+)(in) = ADP + phosphate + 5 H(+)(out). In terms of biological role, mitochondrial membrane ATP synthase (F(1)F(o) ATP synthase) produces ATP from ADP in the presence of a proton gradient across the membrane which is generated by electron transport complexes of the respiratory chain. F-type ATPases consist of two structural domains, F(1) - containing the extramembraneous catalytic core, and F(o) - containing the membrane proton channel, linked together by a central stalk and a peripheral stalk. During catalysis, ATP synthesis in the catalytic domain of F(1) is coupled via a rotary mechanism of the central stalk subunits to proton translocation. Subunits alpha and beta form the catalytic core in F(1). Rotation of the central stalk against the surrounding alpha(3)beta(3) subunits leads to hydrolysis of ATP in three separate catalytic sites on the beta subunits. Contrary to the procyclic, insect form that requires F(1)F(o) ATP synthase for ATP synthesis, the bloodstream form relies on ATP hydrolysis by F(1)F(o) ATP synthase to maintain its mitochondrial membrane potential. In Trypanosoma brucei brucei, this protein is ATP synthase subunit beta, mitochondrial.